The sequence spans 459 residues: Transcription factor AP-2-beta (459 aa).

Lysine 21 participates in a covalent cross-link: Glycyl lysine isopeptide (Lys-Gly) (interchain with G-Cter in SUMO). Residues 30–139 are disordered; the sequence is HDGVPSHSSR…PQLSGLDPRR (110 aa). Positions 35–51 are enriched in polar residues; the sequence is SHSSRLSQLGSVSQGPY. Over residues 121 to 132 the composition is skewed to low complexity; that stretch reads LLPQPRAALPQL. Residue serine 258 is modified to Phosphoserine; by PKA. An H-S-H (helix-span-helix), dimerization region spans residues 299 to 429; it reads RRKAANVTLL…YLTEALKGMD (131 aa). Positions 435 to 459 are disordered; sequence NTTNRHTSGEGPGSKTGDKEEKHRK. Basic and acidic residues predominate over residues 450-459; it reads TGDKEEKHRK.

It belongs to the AP-2 family. Binds DNA as a dimer. Can form homodimers or heterodimers with other AP-2 family members. Interacts with CITED4. Interacts with UBE2I. Interacts with KCTD1; this interaction represses transcription activation. Interacts with CITED2 (via C-terminus); the interaction stimulates TFAP2B-transcriptional activity. In terms of processing, sumoylated. Sumoylated on Lys-21; which inhibits transcriptional activity. In terms of tissue distribution, localizes to neurons in areas of the cerebral cortex, cerebellum and hypothalamus (at protein level).

The protein resides in the nucleus. In terms of biological role, sequence-specific DNA-binding protein that interacts with inducible viral and cellular enhancer elements to regulate transcription of selected genes. AP-2 factors bind to the consensus sequence 5'-GCCNNNGGC-3' and activate genes involved in a large spectrum of important biological functions including proper eye, face, body wall, limb and neural tube development. They also suppress a number of genes including MCAM/MUC18, C/EBP alpha and MYC. AP-2-beta appears to be required for normal face and limb development and for proper terminal differentiation and function of renal tubular epithelia. The chain is Transcription factor AP-2-beta (Tfap2b) from Mus musculus (Mouse).